The following is a 1136-amino-acid chain: Protein stu-1 (1136 aa).

HEAT repeat units lie at residues 95-133 (TLPV…ERSV) and 167-205 (YVPT…KSDL). Disordered regions lie at residues 524–554 (KDPH…MGAP), 567–794 (RAMA…QPQI), and 821–884 (TAGQ…LLDS). The span at 595–622 (VSSTSQASVASASTASAVPAPTKSAFGA) shows a compositional bias: low complexity. A compositionally biased stretch (pro residues) spans 659 to 668 (PAEPASPPSK). Over residues 673 to 683 (TVTSPKTQTLV) the composition is skewed to polar residues. The segment covering 701–716 (SSESGIPIPVSGISSP) has biased composition (low complexity). Polar residues-rich tracts occupy residues 777–793 (LPTQ…QQPQ) and 822–833 (AGQTQPQSTYTS).

Belongs to the CLASP family. In terms of assembly, interacts with microtubules.

The protein localises to the nucleus. It is found in the cytoplasm. It localises to the cytoskeleton. The protein resides in the spindle. Functionally, microtubule binding protein that promotes the stabilization of dynamic microtubules. Required for mitotic spindle formation. This Neurospora crassa (strain ATCC 24698 / 74-OR23-1A / CBS 708.71 / DSM 1257 / FGSC 987) protein is Protein stu-1 (stu-1).